The primary structure comprises 665 residues: DNA ligase (665 aa).

Residues 31–35, 80–81, and Glu111 contribute to the NAD(+) site; these read DEEFD and SL. Lys113 functions as the N6-AMP-lysine intermediate in the catalytic mechanism. Residues Arg134, Glu171, Lys287, and Lys311 each coordinate NAD(+). Positions 405, 408, 423, and 429 each coordinate Zn(2+). Positions 588-665 constitute a BRCT domain; the sequence is FTNHAFQGKI…NEKEFISLCH (78 aa).

It belongs to the NAD-dependent DNA ligase family. LigA subfamily. Mg(2+) is required as a cofactor. Requires Mn(2+) as cofactor.

The enzyme catalyses NAD(+) + (deoxyribonucleotide)n-3'-hydroxyl + 5'-phospho-(deoxyribonucleotide)m = (deoxyribonucleotide)n+m + AMP + beta-nicotinamide D-nucleotide.. Functionally, DNA ligase that catalyzes the formation of phosphodiester linkages between 5'-phosphoryl and 3'-hydroxyl groups in double-stranded DNA using NAD as a coenzyme and as the energy source for the reaction. It is essential for DNA replication and repair of damaged DNA. The sequence is that of DNA ligase from Protochlamydia amoebophila (strain UWE25).